The following is a 437-amino-acid chain: GTPase Der (437 aa).

EngA-type G domains are found at residues 3–168 (PLIA…PESE) and 178–353 (VKLA…RNRS). GTP is bound by residues 9-16 (GRPNVGKS), 56-60 (DTGGY), 120-123 (NKVE), 184-191 (GRPNVGKS), 231-235 (DTAGL), and 296-299 (NKWD). One can recognise a KH-like domain in the interval 354-437 (RKISTSSLNR…VPISLRFMEK (84 aa)).

Belongs to the TRAFAC class TrmE-Era-EngA-EngB-Septin-like GTPase superfamily. EngA (Der) GTPase family. In terms of assembly, associates with the 50S ribosomal subunit.

Its function is as follows. GTPase that plays an essential role in the late steps of ribosome biogenesis. The protein is GTPase Der of Chlorobium limicola (strain DSM 245 / NBRC 103803 / 6330).